Reading from the N-terminus, the 423-residue chain is Serine--tRNA ligase (423 aa).

2 stretches are compositionally biased toward basic and acidic residues: residues 1–24 (MIDLKQLRDDPDRVRESQRTRGED) and 62–71 (KMRDASPEEK). The disordered stretch occupies residues 1–71 (MIDLKQLRDD…KMRDASPEEK (71 aa)). 230–232 (TSE) is an L-serine binding site. Residues 261–263 (RRE) and Val-277 each bind ATP. Glu-284 contacts L-serine. An ATP-binding site is contributed by 348–351 (ELTS). An L-serine-binding site is contributed by Thr-383.

It belongs to the class-II aminoacyl-tRNA synthetase family. Type-1 seryl-tRNA synthetase subfamily. As to quaternary structure, homodimer. The tRNA molecule binds across the dimer.

It localises to the cytoplasm. The catalysed reaction is tRNA(Ser) + L-serine + ATP = L-seryl-tRNA(Ser) + AMP + diphosphate + H(+). It carries out the reaction tRNA(Sec) + L-serine + ATP = L-seryl-tRNA(Sec) + AMP + diphosphate + H(+). It participates in aminoacyl-tRNA biosynthesis; selenocysteinyl-tRNA(Sec) biosynthesis; L-seryl-tRNA(Sec) from L-serine and tRNA(Sec): step 1/1. In terms of biological role, catalyzes the attachment of serine to tRNA(Ser). Is also able to aminoacylate tRNA(Sec) with serine, to form the misacylated tRNA L-seryl-tRNA(Sec), which will be further converted into selenocysteinyl-tRNA(Sec). This Corynebacterium kroppenstedtii (strain DSM 44385 / JCM 11950 / CIP 105744 / CCUG 35717) protein is Serine--tRNA ligase.